The chain runs to 349 residues: N-acetyltaurine hydrolase (349 aa).

A divalent metal cation contacts are provided by His26, His28, Glu169, His201, His230, and Asp298.

The protein belongs to the metallo-dependent hydrolases superfamily. Phosphotriesterase family. Requires a divalent metal cation as cofactor.

It is found in the cytoplasm. The protein localises to the cytosol. The catalysed reaction is N-acetyltaurine + H2O = taurine + acetate. It carries out the reaction N-propanoyltaurine + H2O = propanoate + taurine. The enzyme catalyses N-acetyl-L-methionine + H2O = L-methionine + acetate. It catalyses the reaction N-acetyl-L-isoleucine + H2O = L-isoleucine + acetate. The catalysed reaction is N-acetyl-L-leucine + H2O = L-leucine + acetate. It carries out the reaction N-acetyl-L-valine + H2O = L-valine + acetate. In terms of biological role, N-acetyltaurine hydrolase that catalyzes the hydrolysis of N-acetyltaurine into taurine and acetate. PTER also acts on other N-acetyl amino acids (Met, Ile, Leu, Val) and N-propionyltaurine, but at lower rates. The chain is N-acetyltaurine hydrolase (pter) from Tetraodon nigroviridis (Spotted green pufferfish).